The following is a 623-amino-acid chain: Xaa-Pro aminopeptidase 1 (623 aa).

Arg-77 contributes to the a peptide binding site. Lys-304 carries the post-translational modification N6-acetyllysine. His-395 provides a ligand contact to a peptide. Mn(2+)-binding residues include Asp-415, Asp-426, and His-489. Residues His-489, His-498, and Glu-523 each coordinate a peptide. Mn(2+) is bound by residues Glu-523 and Glu-537.

Belongs to the peptidase M24B family. In terms of assembly, homodimer. Mn(2+) is required as a cofactor.

The protein resides in the cytoplasm. It localises to the cytosol. It carries out the reaction Release of any N-terminal amino acid, including proline, that is linked to proline, even from a dipeptide or tripeptide.. Metalloaminopeptidase that catalyzes the removal of a penultimate prolyl residue from the N-termini of peptides, such as Arg-Pro-Pro. Contributes to the degradation of bradykinin. This Mus musculus (Mouse) protein is Xaa-Pro aminopeptidase 1.